Here is a 154-residue protein sequence, read N- to C-terminus: 6,7-dimethyl-8-ribityllumazine synthase (154 aa).

5-amino-6-(D-ribitylamino)uracil-binding positions include W22, 56 to 58 (AWE), and 80 to 82 (CVI). Residue 85–86 (DT) participates in (2S)-2-hydroxy-3-oxobutyl phosphate binding. H88 serves as the catalytic Proton donor. N113 is a 5-amino-6-(D-ribitylamino)uracil binding site. A (2S)-2-hydroxy-3-oxobutyl phosphate-binding site is contributed by R127.

It belongs to the DMRL synthase family. In terms of assembly, forms an icosahedral capsid composed of 60 subunits, arranged as a dodecamer of pentamers.

It carries out the reaction (2S)-2-hydroxy-3-oxobutyl phosphate + 5-amino-6-(D-ribitylamino)uracil = 6,7-dimethyl-8-(1-D-ribityl)lumazine + phosphate + 2 H2O + H(+). The protein operates within cofactor biosynthesis; riboflavin biosynthesis; riboflavin from 2-hydroxy-3-oxobutyl phosphate and 5-amino-6-(D-ribitylamino)uracil: step 1/2. In terms of biological role, catalyzes the formation of 6,7-dimethyl-8-ribityllumazine by condensation of 5-amino-6-(D-ribitylamino)uracil with 3,4-dihydroxy-2-butanone 4-phosphate. This is the penultimate step in the biosynthesis of riboflavin. In Xanthomonas oryzae pv. oryzae (strain MAFF 311018), this protein is 6,7-dimethyl-8-ribityllumazine synthase.